We begin with the raw amino-acid sequence, 338 residues long: Glycerol-3-phosphate dehydrogenase [NAD(P)+] (338 aa).

The NADPH site is built by Ser-14, Tyr-15, His-35, and Lys-109. Lys-109, Gly-138, and Thr-140 together coordinate sn-glycerol 3-phosphate. Ala-142 lines the NADPH pocket. Sn-glycerol 3-phosphate is bound by residues Lys-194, Asp-247, Ser-257, Arg-258, and Asn-259. Catalysis depends on Lys-194, which acts as the Proton acceptor. Arg-258 is an NADPH binding site. The NADPH site is built by Val-282 and Glu-284.

This sequence belongs to the NAD-dependent glycerol-3-phosphate dehydrogenase family.

Its subcellular location is the cytoplasm. The enzyme catalyses sn-glycerol 3-phosphate + NAD(+) = dihydroxyacetone phosphate + NADH + H(+). It catalyses the reaction sn-glycerol 3-phosphate + NADP(+) = dihydroxyacetone phosphate + NADPH + H(+). The protein operates within membrane lipid metabolism; glycerophospholipid metabolism. Its function is as follows. Catalyzes the reduction of the glycolytic intermediate dihydroxyacetone phosphate (DHAP) to sn-glycerol 3-phosphate (G3P), the key precursor for phospholipid synthesis. This chain is Glycerol-3-phosphate dehydrogenase [NAD(P)+], found in Shewanella putrefaciens (strain CN-32 / ATCC BAA-453).